The primary structure comprises 94 residues: Acylphosphatase (94 aa).

One can recognise an Acylphosphatase-like domain in the interval 5-94 (RLTAFVHGHV…PRDVEGFVER (90 aa)). Active-site residues include Arg-20 and Asn-38.

It belongs to the acylphosphatase family.

The catalysed reaction is an acyl phosphate + H2O = a carboxylate + phosphate + H(+). The protein is Acylphosphatase (acyP) of Corynebacterium glutamicum (strain ATCC 13032 / DSM 20300 / JCM 1318 / BCRC 11384 / CCUG 27702 / LMG 3730 / NBRC 12168 / NCIMB 10025 / NRRL B-2784 / 534).